Reading from the N-terminus, the 631-residue chain is KIF-binding protein (631 aa).

Residues 60-70 (EQGEAGDEADC) show a composition bias toward acidic residues. Residues 60 to 88 (EQGEAGDEADCESSQTADGEPEDGFEKTF) form a disordered region.

The protein belongs to the KIF-binding protein family. As to expression, at 30 hpf, primarily expressed in central and peripheral neurons.

Its subcellular location is the cytoplasm. The protein localises to the cytoskeleton. Activator of KIF1B plus-end-directed microtubule motor activity. Required for organization of axonal microtubules, and axonal outgrowth and maintenance during peripheral and central nervous system development. The protein is KIF-binding protein (kifbp) of Danio rerio (Zebrafish).